Consider the following 325-residue polypeptide: Ferrochelatase (325 aa).

Positions 172 and 267 each coordinate Fe cation.

The protein belongs to the ferrochelatase family.

Its subcellular location is the cytoplasm. The enzyme catalyses heme b + 2 H(+) = protoporphyrin IX + Fe(2+). It functions in the pathway porphyrin-containing compound metabolism; protoheme biosynthesis; protoheme from protoporphyrin-IX: step 1/1. In terms of biological role, catalyzes the ferrous insertion into protoporphyrin IX. This is Ferrochelatase from Acidobacterium capsulatum (strain ATCC 51196 / DSM 11244 / BCRC 80197 / JCM 7670 / NBRC 15755 / NCIMB 13165 / 161).